The chain runs to 377 residues: Succinyl-diaminopimelate desuccinylase (377 aa).

A Zn(2+)-binding site is contributed by H66. The active site involves D68. Zn(2+) is bound at residue D99. E133 serves as the catalytic Proton acceptor. Residues E134, E163, and H349 each contribute to the Zn(2+) site.

The protein belongs to the peptidase M20A family. DapE subfamily. In terms of assembly, homodimer. Zn(2+) serves as cofactor. Co(2+) is required as a cofactor.

It catalyses the reaction N-succinyl-(2S,6S)-2,6-diaminopimelate + H2O = (2S,6S)-2,6-diaminopimelate + succinate. The protein operates within amino-acid biosynthesis; L-lysine biosynthesis via DAP pathway; LL-2,6-diaminopimelate from (S)-tetrahydrodipicolinate (succinylase route): step 3/3. Functionally, catalyzes the hydrolysis of N-succinyl-L,L-diaminopimelic acid (SDAP), forming succinate and LL-2,6-diaminopimelate (DAP), an intermediate involved in the bacterial biosynthesis of lysine and meso-diaminopimelic acid, an essential component of bacterial cell walls. The chain is Succinyl-diaminopimelate desuccinylase from Legionella pneumophila (strain Lens).